The primary structure comprises 722 residues: Biotin--protein ligase (722 aa).

Residues 27-93 (KELGKASDKQ…EPAADGDPGL (67 aa)) are disordered. Positions 46–55 (ASPEAQPAQG) are enriched in low complexity. S295 bears the Phosphoserine mark. The BPL/LPL catalytic domain occupies 459–648 (TRLGKVILFA…VLEKLIDRFQ (190 aa)).

The protein belongs to the biotin--protein ligase family. As to quaternary structure, monomer.

It localises to the cytoplasm. The protein resides in the mitochondrion. It carries out the reaction apo-[methylmalonyl-CoA:pyruvate carboxytransferase] + biotin + ATP = holo-[methylmalonyl-CoA:pyruvate carboxytransferase] + AMP + diphosphate + H(+). The catalysed reaction is apo-[propionyl-CoA:carbon-dioxide ligase (ADP-forming)] + biotin + ATP = holo-[propionyl-CoA:carbon-dioxide ligase (ADP-forming)] + AMP + diphosphate + H(+). It catalyses the reaction apo-[3-methylcrotonoyl-CoA:carbon-dioxide ligase (ADP-forming)] + biotin + ATP = holo-[3-methylcrotonoyl-CoA:carbon-dioxide ligase (ADP-forming)] + AMP + diphosphate + H(+). The enzyme catalyses biotin + L-lysyl-[protein] + ATP = N(6)-biotinyl-L-lysyl-[protein] + AMP + diphosphate + H(+). Biotin--protein ligase catalyzing the biotinylation of the 4 biotin-dependent carboxylases acetyl-CoA-carboxylase, pyruvate carboxylase, propionyl-CoA carboxylase, and methylcrotonyl-CoA carboxylase. The protein is Biotin--protein ligase of Mus musculus (Mouse).